Here is a 90-residue protein sequence, read N- to C-terminus: Acylphosphatase (90 aa).

The Acylphosphatase-like domain maps to 3–90; it reads AIEVDVFGLV…FETNDFAIRG (88 aa). Active-site residues include Arg18 and Asn36.

The protein belongs to the acylphosphatase family.

It carries out the reaction an acyl phosphate + H2O = a carboxylate + phosphate + H(+). This is Acylphosphatase (acyP) from Leuconostoc mesenteroides subsp. mesenteroides (strain ATCC 8293 / DSM 20343 / BCRC 11652 / CCM 1803 / JCM 6124 / NCDO 523 / NBRC 100496 / NCIMB 8023 / NCTC 12954 / NRRL B-1118 / 37Y).